Here is a 420-residue protein sequence, read N- to C-terminus: Serine hydroxymethyltransferase (420 aa).

Residues L121 and 125–127 (GHL) each bind (6S)-5,6,7,8-tetrahydrofolate. An N6-(pyridoxal phosphate)lysine modification is found at K230. Residues E246 and 354–356 (SPF) contribute to the (6S)-5,6,7,8-tetrahydrofolate site.

Belongs to the SHMT family. In terms of assembly, homodimer. Pyridoxal 5'-phosphate serves as cofactor.

It is found in the cytoplasm. It carries out the reaction (6R)-5,10-methylene-5,6,7,8-tetrahydrofolate + glycine + H2O = (6S)-5,6,7,8-tetrahydrofolate + L-serine. Its pathway is one-carbon metabolism; tetrahydrofolate interconversion. The protein operates within amino-acid biosynthesis; glycine biosynthesis; glycine from L-serine: step 1/1. Catalyzes the reversible interconversion of serine and glycine with tetrahydrofolate (THF) serving as the one-carbon carrier. This reaction serves as the major source of one-carbon groups required for the biosynthesis of purines, thymidylate, methionine, and other important biomolecules. Also exhibits THF-independent aldolase activity toward beta-hydroxyamino acids, producing glycine and aldehydes, via a retro-aldol mechanism. This chain is Serine hydroxymethyltransferase, found in Rickettsia typhi (strain ATCC VR-144 / Wilmington).